Reading from the N-terminus, the 125-residue chain is Protein JAZ13 (125 aa).

Positions 6-10 (LDLHL) match the EAR motif. The disordered stretch occupies residues 99–125 (KKRSKSFTLTPNYTSSTSSSSSSLHNF). A compositionally biased stretch (low complexity) spans 112 to 125 (TSSTSSSSSSLHNF).

Monomer. Lack of homodimerization, and very weak or no interaction with AFPH2/NINJA and other JAZ proteins. Interacts (via EAR motif) with TPL. Interacts (via jas motif) with MYC2. In terms of processing, phosphorylated at multiple serine residues.

Non-TIFY functional repressor of jasmonate (JA)-mediated growth and defense responses. Intrinsically resistant to JA-induced turnover, probably due to the absence of the canonical degron that strongly interacts with COI1 in the presence of JA-Ile in the TIFY/JAZ proteins. This is Protein JAZ13 from Arabidopsis thaliana (Mouse-ear cress).